The primary structure comprises 360 residues: Polyamine aminopropyltransferase 2 (360 aa).

Residues 68 to 299 enclose the PABS domain; it reads DIWDEISLKE…TDWGFHIAAN (232 aa). Gln94 provides a ligand contact to S-methyl-5'-thioadenosine. Spermidine-binding residues include His123 and Asp147. S-methyl-5'-thioadenosine-binding positions include Asp167 and 201-202; that span reads DA. Asp219 serves as the catalytic Proton acceptor.

It belongs to the spermidine/spermine synthase family. In terms of assembly, homodimer or homotetramer.

The protein localises to the cytoplasm. It carries out the reaction S-adenosyl 3-(methylsulfanyl)propylamine + putrescine = S-methyl-5'-thioadenosine + spermidine + H(+). Its pathway is amine and polyamine biosynthesis; spermidine biosynthesis; spermidine from putrescine: step 1/1. Functionally, catalyzes the irreversible transfer of a propylamine group from the amino donor S-adenosylmethioninamine (decarboxy-AdoMet) to putrescine (1,4-diaminobutane) to yield spermidine. In Bacillus anthracis, this protein is Polyamine aminopropyltransferase 2.